Here is a 146-residue protein sequence, read N- to C-terminus: Leghemoglobin Lb120-8 (146 aa).

In terms of domain architecture, Globin spans 2–146 (GFTEKQEALV…LASAIKKAMN (145 aa)). 2 positions are modified to nitrated tyrosine: Tyr24 and Tyr29. Residue Ser44 participates in heme b binding. Ser44 bears the Phosphoserine mark. An O2-binding site is contributed by His61. The heme b site is built by Lys64, His93, and Lys96. Position 134 is a nitrated tyrosine (Tyr134).

This sequence belongs to the plant globin family. Monomer. Nitrated in effective nodules and particularly in hypoxic conditions; this mechanism may play a protective role in the symbiosis by buffering toxic peroxynitrite NO(2)(-). Nitration level decrease during nodule senescence. In terms of processing, phosphorylation at Ser-44 disrupts the molecular environment of its porphyrin ring oxygen binding pocket, thus leading to a reduced oxygen consumption and to the delivery of oxygen O(2) to symbiosomes. As to expression, root nodules.

Its subcellular location is the cytoplasm. It localises to the cytosol. It is found in the nucleus. Its function is as follows. Leghemoglobin that reversibly binds oxygen O(2) through a pentacoordinated heme iron. In root nodules, facilitates the diffusion of oxygen to the bacteroids while preventing the bacterial nitrogenase from being inactivated by buffering dioxygen, nitric oxide and carbon monoxide, and promoting the formation of reactive oxygen species (ROS, e.g. H(2)O(2)). This role is essential for symbiotic nitrogen fixation (SNF). The sequence is that of Leghemoglobin Lb120-8 from Pisum sativum (Garden pea).